The primary structure comprises 97 residues: MNYIYPVNQVDIIKASDFQSQEISSLEDVVSAKYSDIKMDTDIQVSQIMEMVSNPESLNPESLAKLQTTLSNYSIGVSLAGTLARKTVSAVETLLKS.

It to S.typhimurium PrgJ.

Its function is as follows. Necessary for the secretion of IPA invasins. In Shigella flexneri, this protein is Protein MxiI (mxiI).